The chain runs to 548 residues: Putative malate oxidoreductase [NAD] (548 aa).

The active-site Proton donor is Tyr-96. The Proton acceptor role is filled by Lys-169. A divalent metal cation-binding residues include Glu-240, Asp-241, and Asp-264. Residues 297-300 (AGTA), Asn-410, and Asn-455 contribute to the NAD(+) site.

Belongs to the malic enzymes family. Requires Mg(2+) as cofactor. Mn(2+) serves as cofactor.

It catalyses the reaction (S)-malate + NAD(+) = pyruvate + CO2 + NADH. The enzyme catalyses oxaloacetate + H(+) = pyruvate + CO2. The protein is Putative malate oxidoreductase [NAD] (mez) of Mycobacterium tuberculosis (strain CDC 1551 / Oshkosh).